Consider the following 190-residue polypeptide: 7-methyl-GTP pyrophosphatase (190 aa).

The Proton acceptor role is filled by Asp69.

It belongs to the Maf family. YceF subfamily. A divalent metal cation is required as a cofactor.

The protein localises to the cytoplasm. The catalysed reaction is N(7)-methyl-GTP + H2O = N(7)-methyl-GMP + diphosphate + H(+). Functionally, nucleoside triphosphate pyrophosphatase that hydrolyzes 7-methyl-GTP (m(7)GTP). May have a dual role in cell division arrest and in preventing the incorporation of modified nucleotides into cellular nucleic acids. In Xanthomonas oryzae pv. oryzae (strain MAFF 311018), this protein is 7-methyl-GTP pyrophosphatase.